The chain runs to 304 residues: Cell surface-binding protein OPG105 (304 aa).

Residues 1 to 235 enclose the Alpha-carbonic anhydrase domain; sequence MPQQLSPINI…NDDTQVYYSG (235 aa). Residues 1 to 275 are Virion surface-facing; the sequence is MPQQLSPINI…YQKYIEENKT (275 aa). Residues 276-294 form a helical membrane-spanning segment; it reads FAIIAIVFVFILTAILFFM. At 295 to 304 the chain is on the intravirion side; sequence SRRYSREKQN.

The protein belongs to the alpha-carbonic anhydrase family. In terms of assembly, homodimer; disulfide-linked. Post-translationally, apparently non-glycosylated.

It localises to the virion membrane. Its function is as follows. Binds to chondroitin sulfate on the cell surface to provide virion attachment to target cell. The chain is Cell surface-binding protein OPG105 (OPG105) from Homo sapiens (Human).